The primary structure comprises 264 residues: S-adenosylmethionine decarboxylase proenzyme (264 aa).

Serine 113 functions as the Schiff-base intermediate with substrate; via pyruvic acid in the catalytic mechanism. At serine 113 the chain carries Pyruvic acid (Ser); by autocatalysis. Histidine 118 serves as the catalytic Proton acceptor; for processing activity. The active-site Proton donor; for catalytic activity is cysteine 141.

This sequence belongs to the prokaryotic AdoMetDC family. Type 2 subfamily. As to quaternary structure, heterooctamer of four alpha and four beta chains arranged as a tetramer of alpha/beta heterodimers. Pyruvate serves as cofactor. Is synthesized initially as an inactive proenzyme. Formation of the active enzyme involves a self-maturation process in which the active site pyruvoyl group is generated from an internal serine residue via an autocatalytic post-translational modification. Two non-identical subunits are generated from the proenzyme in this reaction, and the pyruvate is formed at the N-terminus of the alpha chain, which is derived from the carboxyl end of the proenzyme. The post-translation cleavage follows an unusual pathway, termed non-hydrolytic serinolysis, in which the side chain hydroxyl group of the serine supplies its oxygen atom to form the C-terminus of the beta chain, while the remainder of the serine residue undergoes an oxidative deamination to produce ammonia and the pyruvoyl group blocking the N-terminus of the alpha chain.

The enzyme catalyses S-adenosyl-L-methionine + H(+) = S-adenosyl 3-(methylsulfanyl)propylamine + CO2. The protein operates within amine and polyamine biosynthesis; S-adenosylmethioninamine biosynthesis; S-adenosylmethioninamine from S-adenosyl-L-methionine: step 1/1. Its function is as follows. Catalyzes the decarboxylation of S-adenosylmethionine to S-adenosylmethioninamine (dcAdoMet), the propylamine donor required for the synthesis of the polyamines spermine and spermidine from the diamine putrescine. The protein is S-adenosylmethionine decarboxylase proenzyme of Pseudomonas aeruginosa (strain UCBPP-PA14).